The chain runs to 911 residues: Pesticidal crystal protein Cry1Af (911 aa).

It belongs to the delta endotoxin family.

In terms of biological role, promotes colloidosmotic lysis by binding to the midgut epithelial cells of both dipteran and lepidopteran larvae. This chain is Pesticidal crystal protein Cry1Af (cry1Af), found in Bacillus thuringiensis.